A 341-amino-acid chain; its full sequence is Phenylalanine--tRNA ligase alpha subunit (341 aa).

Residue Glu259 participates in Mg(2+) binding.

This sequence belongs to the class-II aminoacyl-tRNA synthetase family. Phe-tRNA synthetase alpha subunit type 1 subfamily. In terms of assembly, tetramer of two alpha and two beta subunits. It depends on Mg(2+) as a cofactor.

The protein resides in the cytoplasm. It catalyses the reaction tRNA(Phe) + L-phenylalanine + ATP = L-phenylalanyl-tRNA(Phe) + AMP + diphosphate + H(+). This is Phenylalanine--tRNA ligase alpha subunit from Mycobacterium bovis (strain ATCC BAA-935 / AF2122/97).